The chain runs to 199 residues: MRVLGVDPGLTRCGIGVVDGGRGRTVTCVGVGVARTPADQELSARLLGVAEAVDEWLDTHRPEVVAIERVFSQHNVRTVMGTAQVSGIVALAAARRGLPVAFHTPSEVKAAISGSGRADKRQVTTMVTKILGLAEAPKPADAADALALAVCHLWRAPMAGRLAEAEAKAAALARNHKARLKDARQAAAQRAARTGGVQR.

Catalysis depends on residues Asp7, Glu68, and Asp141. Mg(2+) is bound by residues Asp7, Glu68, and Asp141.

This sequence belongs to the RuvC family. As to quaternary structure, homodimer which binds Holliday junction (HJ) DNA. The HJ becomes 2-fold symmetrical on binding to RuvC with unstacked arms; it has a different conformation from HJ DNA in complex with RuvA. In the full resolvosome a probable DNA-RuvA(4)-RuvB(12)-RuvC(2) complex forms which resolves the HJ. The cofactor is Mg(2+).

The protein localises to the cytoplasm. It catalyses the reaction Endonucleolytic cleavage at a junction such as a reciprocal single-stranded crossover between two homologous DNA duplexes (Holliday junction).. The RuvA-RuvB-RuvC complex processes Holliday junction (HJ) DNA during genetic recombination and DNA repair. Endonuclease that resolves HJ intermediates. Cleaves cruciform DNA by making single-stranded nicks across the HJ at symmetrical positions within the homologous arms, yielding a 5'-phosphate and a 3'-hydroxyl group; requires a central core of homology in the junction. The consensus cleavage sequence is 5'-(A/T)TT(C/G)-3'. Cleavage occurs on the 3'-side of the TT dinucleotide at the point of strand exchange. HJ branch migration catalyzed by RuvA-RuvB allows RuvC to scan DNA until it finds its consensus sequence, where it cleaves and resolves the cruciform DNA. The chain is Crossover junction endodeoxyribonuclease RuvC from Saccharopolyspora erythraea (strain ATCC 11635 / DSM 40517 / JCM 4748 / NBRC 13426 / NCIMB 8594 / NRRL 2338).